The primary structure comprises 156 residues: Snaclec 2 (156 aa).

A signal peptide spans 1–21 (MGRFIFLSSGLLVVFLSLSGA). Disulfide bonds link Cys25–Cys36, Cys53–Cys150, and Cys125–Cys142. The region spanning 32–151 (FDQHCYRAFD…CGDDYPFVCK (120 aa)) is the C-type lectin domain.

The protein belongs to the snaclec family. In terms of assembly, heterodimer; disulfide-linked. In terms of tissue distribution, expressed by the venom gland.

It localises to the secreted. In terms of biological role, interferes with one step of hemostasis (modulation of platelet aggregation, or coagulation cascade, for example). The polypeptide is Snaclec 2 (Bitis gabonica (Gaboon adder)).